The primary structure comprises 187 residues: Epididymal-specific lipocalin-10 (187 aa).

An N-terminal signal peptide occupies residues methionine 1–alanine 19. Cysteine 90 and cysteine 163 form a disulfide bridge. N-linked (GlcNAc...) asparagine glycosylation is present at asparagine 149. An N6-acetyllysine modification is found at lysine 170.

It belongs to the calycin superfamily. Lipocalin family.

It localises to the secreted. Functionally, may play a role in male fertility. May act as a retinoid carrier protein within the epididymis. The polypeptide is Epididymal-specific lipocalin-10 (LCN10) (Homo sapiens (Human)).